The primary structure comprises 89 residues: Small ribosomal subunit protein uS15 (89 aa).

It belongs to the universal ribosomal protein uS15 family. Part of the 30S ribosomal subunit. Forms a bridge to the 50S subunit in the 70S ribosome, contacting the 23S rRNA.

In terms of biological role, one of the primary rRNA binding proteins, it binds directly to 16S rRNA where it helps nucleate assembly of the platform of the 30S subunit by binding and bridging several RNA helices of the 16S rRNA. Forms an intersubunit bridge (bridge B4) with the 23S rRNA of the 50S subunit in the ribosome. In Burkholderia ambifaria (strain MC40-6), this protein is Small ribosomal subunit protein uS15.